The primary structure comprises 212 residues: MKLHNDYRLLTPRINRDKQSFLARVIITLKTSFSLDLFSGLKTALGAFFSPKVTIHYPLESAPLSPRYRAIHKLQRLLESENERCIGCGLCEKICTSNCIRIITDKGEDGRKKILNYSINFGRCIYCGLCAEVCPELAIVHGDLVENASTQRAFFGFKPQLLEHKSSLLEFGGFGSISVNADERVKTTPLSYCTQDSQNMLSESAPQENTNV.

4Fe-4S ferredoxin-type domains lie at 76-105 (RLLE…IITD) and 115-144 (LNYS…HGDL). C85, C88, C91, C95, C124, C127, C130, and C134 together coordinate [4Fe-4S] cluster.

It belongs to the complex I 23 kDa subunit family. In terms of assembly, NDH-1 is composed of 14 different subunits. Subunits NuoA, H, J, K, L, M, N constitute the membrane sector of the complex. [4Fe-4S] cluster serves as cofactor.

It is found in the cell inner membrane. It catalyses the reaction a quinone + NADH + 5 H(+)(in) = a quinol + NAD(+) + 4 H(+)(out). NDH-1 shuttles electrons from NADH, via FMN and iron-sulfur (Fe-S) centers, to quinones in the respiratory chain. The immediate electron acceptor for the enzyme in this species is believed to be ubiquinone. Couples the redox reaction to proton translocation (for every two electrons transferred, four hydrogen ions are translocated across the cytoplasmic membrane), and thus conserves the redox energy in a proton gradient. This Helicobacter hepaticus (strain ATCC 51449 / 3B1) protein is NADH-quinone oxidoreductase subunit I.